Reading from the N-terminus, the 367-residue chain is Pyrimidine monooxygenase RutA (367 aa).

Residues 50 to 51, N116, E125, 141 to 142, and S191 each bind FMN; these read IK and RY.

This sequence belongs to the NtaA/SnaA/DszA monooxygenase family. RutA subfamily.

It catalyses the reaction uracil + FMNH2 + NADH + O2 = (Z)-3-ureidoacrylate + FMN + NAD(+) + H2O + H(+). The enzyme catalyses thymine + FMNH2 + NADH + O2 = (Z)-2-methylureidoacrylate + FMN + NAD(+) + H2O + H(+). Its function is as follows. Catalyzes the pyrimidine ring opening between N-3 and C-4 by an unusual flavin hydroperoxide-catalyzed mechanism, adding oxygen atoms in the process to yield ureidoacrylate peracid, that immediately reacts with FMN forming ureidoacrylate and FMN-N(5)-oxide. The FMN-N(5)-oxide reacts spontaneously with NADH to produce FMN. Requires the flavin reductase RutF to regenerate FMN in vivo. This chain is Pyrimidine monooxygenase RutA, found in Allorhizobium ampelinum (strain ATCC BAA-846 / DSM 112012 / S4) (Agrobacterium vitis (strain S4)).